The chain runs to 244 residues: tRNA (guanine-N(7)-)-methyltransferase (244 aa).

Over residues 1–10 (MSDTPQSPAQ) the composition is skewed to polar residues. The disordered stretch occupies residues 1-20 (MSDTPQSPAQGSLAEHDEAR). S-adenosyl-L-methionine is bound by residues E74, E99, D126, and D149. Residue D149 is part of the active site. Substrate is bound by residues K153, D185, and 222–225 (TKFE).

It belongs to the class I-like SAM-binding methyltransferase superfamily. TrmB family.

It carries out the reaction guanosine(46) in tRNA + S-adenosyl-L-methionine = N(7)-methylguanosine(46) in tRNA + S-adenosyl-L-homocysteine. Its pathway is tRNA modification; N(7)-methylguanine-tRNA biosynthesis. Functionally, catalyzes the formation of N(7)-methylguanine at position 46 (m7G46) in tRNA. This Pseudomonas aeruginosa (strain UCBPP-PA14) protein is tRNA (guanine-N(7)-)-methyltransferase.